The chain runs to 706 residues: Fatty acid oxidation complex subunit alpha (706 aa).

Residues 1–188 (MEKTFSLSRR…KMGLVDDVVP (188 aa)) form an enoyl-CoA hydratase region. Positions 308-706 (RKVAKAVVLG…AMAAEGKTFY (399 aa)) are 3-hydroxyacyl-CoA dehydrogenase.

The protein in the N-terminal section; belongs to the enoyl-CoA hydratase/isomerase family. In the central section; belongs to the 3-hydroxyacyl-CoA dehydrogenase family. As to quaternary structure, heterotetramer of two alpha chains (FadJ) and two beta chains (FadI).

The protein localises to the cytoplasm. It carries out the reaction a (3S)-3-hydroxyacyl-CoA = a (2E)-enoyl-CoA + H2O. It catalyses the reaction a 4-saturated-(3S)-3-hydroxyacyl-CoA = a (3E)-enoyl-CoA + H2O. The enzyme catalyses a (3S)-3-hydroxyacyl-CoA + NAD(+) = a 3-oxoacyl-CoA + NADH + H(+). The catalysed reaction is (3S)-3-hydroxybutanoyl-CoA = (3R)-3-hydroxybutanoyl-CoA. It functions in the pathway lipid metabolism; fatty acid beta-oxidation. Functionally, catalyzes the formation of a hydroxyacyl-CoA by addition of water on enoyl-CoA. Also exhibits 3-hydroxyacyl-CoA epimerase and 3-hydroxyacyl-CoA dehydrogenase activities. This chain is Fatty acid oxidation complex subunit alpha, found in Shewanella amazonensis (strain ATCC BAA-1098 / SB2B).